Consider the following 383-residue polypeptide: Queuine tRNA-ribosyltransferase (383 aa).

The active-site Proton acceptor is the Asp-90. Substrate-binding positions include 90–94 (DSGGF), Asp-144, Gln-193, and Gly-227. Residues 258-264 (GVGTPED) are RNA binding. Asp-277 functions as the Nucleophile in the catalytic mechanism. Residues 282 to 286 (TRNAR) are RNA binding; important for wobble base 34 recognition. Residues Cys-315, Cys-317, Cys-320, and His-346 each contribute to the Zn(2+) site.

This sequence belongs to the queuine tRNA-ribosyltransferase family. In terms of assembly, homodimer. Within each dimer, one monomer is responsible for RNA recognition and catalysis, while the other monomer binds to the replacement base PreQ1. It depends on Zn(2+) as a cofactor.

The catalysed reaction is 7-aminomethyl-7-carbaguanine + guanosine(34) in tRNA = 7-aminomethyl-7-carbaguanosine(34) in tRNA + guanine. Its pathway is tRNA modification; tRNA-queuosine biosynthesis. In terms of biological role, catalyzes the base-exchange of a guanine (G) residue with the queuine precursor 7-aminomethyl-7-deazaguanine (PreQ1) at position 34 (anticodon wobble position) in tRNAs with GU(N) anticodons (tRNA-Asp, -Asn, -His and -Tyr). Catalysis occurs through a double-displacement mechanism. The nucleophile active site attacks the C1' of nucleotide 34 to detach the guanine base from the RNA, forming a covalent enzyme-RNA intermediate. The proton acceptor active site deprotonates the incoming PreQ1, allowing a nucleophilic attack on the C1' of the ribose to form the product. After dissociation, two additional enzymatic reactions on the tRNA convert PreQ1 to queuine (Q), resulting in the hypermodified nucleoside queuosine (7-(((4,5-cis-dihydroxy-2-cyclopenten-1-yl)amino)methyl)-7-deazaguanosine). The protein is Queuine tRNA-ribosyltransferase of Ralstonia pickettii (strain 12J).